The following is a 261-amino-acid chain: Carnitinyl-CoA dehydratase (261 aa).

The active-site Nucleophile is Glu-111. Glu-131 functions as the Proton acceptor in the catalytic mechanism.

The protein belongs to the enoyl-CoA hydratase/isomerase family.

It catalyses the reaction (R)-carnitinyl-CoA = crotonobetainyl-CoA + H2O. It functions in the pathway amine and polyamine metabolism; carnitine metabolism. Catalyzes the reversible dehydration of L-carnitinyl-CoA to crotonobetainyl-CoA. In Proteus mirabilis (strain HI4320), this protein is Carnitinyl-CoA dehydratase.